The primary structure comprises 81 residues: Sulfur carrier protein TusA (81 aa).

Cysteine 19 (cysteine persulfide intermediate) is an active-site residue.

This sequence belongs to the sulfur carrier protein TusA family. In terms of assembly, interacts with IscS.

It is found in the cytoplasm. Its pathway is tRNA modification. In terms of biological role, sulfur carrier protein involved in sulfur trafficking in the cell. Part of a sulfur-relay system required for 2-thiolation during synthesis of 2-thiouridine of the modified wobble base 5-methylaminomethyl-2-thiouridine (mnm(5)s(2)U) in tRNA. Interacts with IscS and stimulates its cysteine desulfurase activity. Accepts an activated sulfur from IscS, which is then transferred to TusD, and thus determines the direction of sulfur flow from IscS to 2-thiouridine formation. Also appears to be involved in sulfur transfer for the biosynthesis of molybdopterin. The sequence is that of Sulfur carrier protein TusA from Erwinia tasmaniensis (strain DSM 17950 / CFBP 7177 / CIP 109463 / NCPPB 4357 / Et1/99).